Consider the following 166-residue polypeptide: uncharacterized protein (166 aa).

The GIY-YIG domain occupies 2-82 (DNWVCYLIMS…KRLSKKRNIQ (81 aa)). The disordered stretch occupies residues 23–43 (NNRQRRLNDHNNLNPSRKGAK).

This is an uncharacterized protein from Acanthamoeba polyphaga mimivirus (APMV).